A 228-amino-acid chain; its full sequence is Lipoprotein-releasing system ATP-binding protein LolD (228 aa).

An ABC transporter domain is found at 6–228; sequence IKCINLNKSY…ENNQIFNYES (223 aa). 42–49 serves as a coordination point for ATP; it reads GKSGSGKT.

The protein belongs to the ABC transporter superfamily. Lipoprotein translocase (TC 3.A.1.125) family.

The protein localises to the cell inner membrane. In terms of biological role, usually LolD forms an ABC transporter complex with LolC and LolE involved in the translocation of lipoprotein, in an ATP-dependent manner. However, LolE is certainly not functional as it is frameshifted. The chain is Lipoprotein-releasing system ATP-binding protein LolD from Buchnera aphidicola subsp. Acyrthosiphon pisum (strain APS) (Acyrthosiphon pisum symbiotic bacterium).